The following is a 125-amino-acid chain: Flagellar protein FliT (125 aa).

The required for homodimerization stretch occupies residues 1-50 (MDNKMDLLSAYQRILSLSEQMLNLAKNEKWDELVDMEITYLKAVEVISHS). Residues 60 to 98 (LQQKMTNILQIILDNENEIKKLLQKRLDELSKLIKQASQ) form a fliD binding region.

This sequence belongs to the FliT family. Homodimer. Interacts with FliD and FlhC.

Its subcellular location is the cytoplasm. The protein resides in the cytosol. Its function is as follows. Dual-function protein that regulates the transcription of class 2 flagellar operons and that also acts as an export chaperone for the filament-capping protein FliD. As a transcriptional regulator, acts as an anti-FlhDC factor; it directly binds FlhC, thus inhibiting the binding of the FlhC/FlhD complex to class 2 promoters, resulting in decreased expression of class 2 flagellar operons. As a chaperone, effects FliD transition to the membrane by preventing its premature polymerization, and by directing it to the export apparatus. This Photorhabdus laumondii subsp. laumondii (strain DSM 15139 / CIP 105565 / TT01) (Photorhabdus luminescens subsp. laumondii) protein is Flagellar protein FliT.